The chain runs to 375 residues: Aminomethyltransferase (375 aa).

The protein belongs to the GcvT family. As to quaternary structure, the glycine cleavage system is composed of four proteins: P, T, L and H.

The catalysed reaction is N(6)-[(R)-S(8)-aminomethyldihydrolipoyl]-L-lysyl-[protein] + (6S)-5,6,7,8-tetrahydrofolate = N(6)-[(R)-dihydrolipoyl]-L-lysyl-[protein] + (6R)-5,10-methylene-5,6,7,8-tetrahydrofolate + NH4(+). Its function is as follows. The glycine cleavage system catalyzes the degradation of glycine. The protein is Aminomethyltransferase of Cupriavidus taiwanensis (strain DSM 17343 / BCRC 17206 / CCUG 44338 / CIP 107171 / LMG 19424 / R1) (Ralstonia taiwanensis (strain LMG 19424)).